The chain runs to 268 residues: Photosystem II 22 kDa protein 1, chloroplastic (268 aa).

The N-terminal 60 residues, 1-60 (MAQSMLVSGANGTVAAASTSRLQPVRPTPFSRLVLSQPSSSLGRAVSVKTVALFGRSKTK), are a transit peptide targeting the chloroplast. Tandem repeats lie at residues 54–161 (FGRS…FVDD) and 164–268 (VTGL…DDEE). 4 helical membrane passes run 99-119 (VAML…KGIL), 133-153 (AEPL…GALG), 199-219 (LFVG…EIIT), and 234-254 (PINE…IAAI).

Belongs to the ELIP/psbS family. In terms of tissue distribution, expressed at low levels in leaves (at protein level).

It localises to the plastid. Its subcellular location is the chloroplast thylakoid membrane. Involved in high light-mediated energy-dependent nonphotochemical quenching (NPQ, qE) and thermal dissipation (TD) thus regulating energy conversion in photosystem II and protecting from photoinhibition. Also seems to regulate quantum yield of electron transport in fluctuating light conditions. This Oryza sativa subsp. indica (Rice) protein is Photosystem II 22 kDa protein 1, chloroplastic.